The chain runs to 330 residues: Taste receptor type 2 member 136 (330 aa).

The Extracellular portion of the chain corresponds to 1–32 (MKSQPVTQELHFIFPLFKTISSDIMSFLVSIA). Residues 33–53 (GIAMLAQIVLGTFANVFIVLV) traverse the membrane as a helical segment. Over 54 to 73 (TCTDCIRRRKLFLADGILTS) the chain is Cytoplasmic. The chain crosses the membrane as a helical span at residues 74-94 (LAFCRIGMLWVILISWCSIVF). Topologically, residues 95-122 (HQALSLQVRFSICVGWAVTNHFNMWLAT) are extracellular. A helical membrane pass occupies residues 123–143 (ILSILYLLKIGNFSNLIFLGL). Topologically, residues 144 to 149 (KRKIKS) are cytoplasmic. Residues 150–170 (VFIVVLLASLVLLFPNLITVT) form a helical membrane-spanning segment. Over 171 to 201 (VCETVQANGYRGNLTGKTKRTYFMNLTAMIS) the chain is Extracellular. 2 N-linked (GlcNAc...) asparagine glycosylation sites follow: asparagine 183 and asparagine 195. The helical transmembrane segment at 202-222 (FTLDNIISFTISMVCFLLLIY) threads the bilayer. Topologically, residues 223 to 248 (SLCKHLRTMRLYGKGPHNPSASAHIK) are cytoplasmic. A helical membrane pass occupies residues 249-269 (ALQAVISFLLLFSMFILSLII). Residues 270 to 283 (SGYNYMKPLNEPVH) are Extracellular-facing. A helical membrane pass occupies residues 284–304 (LICQLIGTLYPSSHSYVLLWG). The Cytoplasmic segment spans residues 305–330 (NRRIKLAFVLAMVQVRARLWLKEEKP).

Belongs to the G-protein coupled receptor T2R family.

Its subcellular location is the membrane. In terms of biological role, putative taste receptor which may play a role in the perception of bitterness. This Rattus norvegicus (Rat) protein is Taste receptor type 2 member 136.